The chain runs to 146 residues: UPF0260 protein Ssed_2516 (146 aa).

Belongs to the UPF0260 family.

This is UPF0260 protein Ssed_2516 from Shewanella sediminis (strain HAW-EB3).